Here is a 707-residue protein sequence, read N- to C-terminus: MSIFNKVTKSFQWGQHKVTMETGEVARQASGAVVVDMDGTVVLATVVAKTDAKPGQDFFPLTVDYLEKTYAAGRIPGSFFKREGRPSEFETLTSRLIDRPIRPLFPEGFFNEVQVVIHVLSLNPEVEGDIPALIASSAALSISGIPFNGPIGAARVAYVDGQYVLNPGKTQLKDSKMDLVVAGTEAAVLMVESEAQQLSEEIMLGAVVFGHEQANIAINAIHELVRDAGKPVWDWQAPAKDEPLIAKVNELAGAKLQAAYQIRSKQARTQACRVAYADVMAALKADGVAFDGVTVEGMLFDIEAKIVRSQILAGEPRIDGRDTRTVRAIEIRNSVLPRTHGSALFTRGETQALVVTTLGTERDAQRIDALSGDYEDRFMLHYNMPPFATGETGRVGSPKRREIGHGRLAKRALIAVLPTKEEFPYTMRVVSEITESNGSSSMASVCGGCLSLMDAGVPMKAHVAGIAMGLIKEENRFAVLTDILGDEDHLGDMDFKVAGTTFGITALQMDIKIQGITKEIMQVALAQAKEARMHILGKMQEAMGEAKAEVSDFAPRLYVMKINPEKIRDVIGKGGAVIRALTEETGTQINIEEDGTITIASNDSAKADEAKRRIAEITAEVEIGKVYEGAITKILDFGALVNLLPGKDGLLHISQIAHERVEKVTDYLSEGQIVKVKVLETDEKGRVKLSMKALLDRPAQNQDQDRG.

Mg(2+) is bound by residues Asp-488 and Asp-494. The region spanning 555–614 (PRLYVMKINPEKIRDVIGKGGAVIRALTEETGTQINIEEDGTITIASNDSAKADEAKRRI) is the KH domain. One can recognise an S1 motif domain in the interval 624–692 (GKVYEGAITK…EKGRVKLSMK (69 aa)).

The protein belongs to the polyribonucleotide nucleotidyltransferase family. Requires Mg(2+) as cofactor.

Its subcellular location is the cytoplasm. The enzyme catalyses RNA(n+1) + phosphate = RNA(n) + a ribonucleoside 5'-diphosphate. In terms of biological role, involved in mRNA degradation. Catalyzes the phosphorolysis of single-stranded polyribonucleotides processively in the 3'- to 5'-direction. The chain is Polyribonucleotide nucleotidyltransferase from Polaromonas sp. (strain JS666 / ATCC BAA-500).